The following is a 368-amino-acid chain: Phospho-N-acetylmuramoyl-pentapeptide-transferase (368 aa).

9 consecutive transmembrane segments (helical) span residues 30–50 (AAAV…IKYL), 72–92 (LPTM…FLWA), 99–119 (VWLI…DDYM), 139–159 (VLLG…SVLL), 170–190 (LTID…TAVS), 201–221 (GLAS…AYLA), 238–258 (GGEI…FLWF), 264–286 (EIIM…ALLI), and 345–365 (KIVI…LMTL).

The protein belongs to the glycosyltransferase 4 family. MraY subfamily. Requires Mg(2+) as cofactor.

It is found in the cell inner membrane. It catalyses the reaction UDP-N-acetyl-alpha-D-muramoyl-L-alanyl-gamma-D-glutamyl-meso-2,6-diaminopimeloyl-D-alanyl-D-alanine + di-trans,octa-cis-undecaprenyl phosphate = di-trans,octa-cis-undecaprenyl diphospho-N-acetyl-alpha-D-muramoyl-L-alanyl-D-glutamyl-meso-2,6-diaminopimeloyl-D-alanyl-D-alanine + UMP. It functions in the pathway cell wall biogenesis; peptidoglycan biosynthesis. Catalyzes the initial step of the lipid cycle reactions in the biosynthesis of the cell wall peptidoglycan: transfers peptidoglycan precursor phospho-MurNAc-pentapeptide from UDP-MurNAc-pentapeptide onto the lipid carrier undecaprenyl phosphate, yielding undecaprenyl-pyrophosphoryl-MurNAc-pentapeptide, known as lipid I. The chain is Phospho-N-acetylmuramoyl-pentapeptide-transferase from Chlorobium limicola (strain DSM 245 / NBRC 103803 / 6330).